The following is a 144-amino-acid chain: Large ribosomal subunit protein uL13 (144 aa).

It belongs to the universal ribosomal protein uL13 family. As to quaternary structure, part of the 50S ribosomal subunit.

This protein is one of the early assembly proteins of the 50S ribosomal subunit, although it is not seen to bind rRNA by itself. It is important during the early stages of 50S assembly. The chain is Large ribosomal subunit protein uL13 from Clostridium kluyveri (strain NBRC 12016).